The sequence spans 218 residues: Probable transaldolase (218 aa).

Residue Lys-83 is the Schiff-base intermediate with substrate of the active site.

It belongs to the transaldolase family. Type 3B subfamily.

The protein localises to the cytoplasm. The catalysed reaction is D-sedoheptulose 7-phosphate + D-glyceraldehyde 3-phosphate = D-erythrose 4-phosphate + beta-D-fructose 6-phosphate. The protein operates within carbohydrate degradation; pentose phosphate pathway; D-glyceraldehyde 3-phosphate and beta-D-fructose 6-phosphate from D-ribose 5-phosphate and D-xylulose 5-phosphate (non-oxidative stage): step 2/3. In terms of biological role, transaldolase is important for the balance of metabolites in the pentose-phosphate pathway. The protein is Probable transaldolase (tal) of Mesorhizobium japonicum (strain LMG 29417 / CECT 9101 / MAFF 303099) (Mesorhizobium loti (strain MAFF 303099)).